Here is an 836-residue protein sequence, read N- to C-terminus: CUB domain-containing protein 1 (836 aa).

A signal peptide spans Met-1–Ala-29. Residues Phe-30–Thr-667 are Extracellular-facing. N-linked (GlcNAc...) asparagine glycans are attached at residues Asn-39, Asn-122, Asn-180, Asn-205, Asn-270, Asn-310, and Asn-386. In terms of domain architecture, CUB spans Cys-417–Glu-544. Cys-476 and Cys-499 are oxidised to a cystine. Residues Val-668–Ile-688 traverse the membrane as a helical segment. Residues Cys-689 to Glu-836 lie on the Cytoplasmic side of the membrane. A Phosphotyrosine modification is found at Tyr-734. A disordered region spans residues Pro-776–Glu-836.

In terms of assembly, interacts with CDH2/N-cadherin, CDH3/P-cadherin, SDC1/syndecan-1, SDC4/syndecan-4 and the serine protease ST14/MT-SP1. Also interacts with SRC and PRKCG/protein kinase C gamma. In terms of processing, phosphorylated on tyrosine by kinases of the SRC family such as SRC and YES as well as by the protein kinase C gamma/PRKCG. Dephosphorylated by phosphotyrosine phosphatases. Also phosphorylated by suramin, a heparin analog. Tyrosine phosphorylated in response to dissociation of integrin alpha-6 beta-4 from laminin-5. Post-translationally, N-glycosylated. A soluble form may also be produced by proteolytic cleavage at the cell surface (shedding). Another peptide of 80 kDa (p80) is present in cultured keratinocytes probably due to tryptic cleavage at an unidentified site on its N-terminal side. Converted to p80 by plasmin, a trypsin-like protease. As to expression, highly expressed in mitotic cells with low expression during interphase. Detected at highest levels in skeletal muscle and colon with lower levels in kidney, small intestine, placenta and lung. Up-regulated in a number of human tumor cell lines, as well as in colorectal cancer, breast carcinoma and lung cancer. Also expressed in cells with phenotypes reminiscent of mesenchymal stem cells and neural stem cells.

The protein localises to the cell membrane. The protein resides in the secreted. Its function is as follows. May be involved in cell adhesion and cell matrix association. May play a role in the regulation of anchorage versus migration or proliferation versus differentiation via its phosphorylation. May be a novel marker for leukemia diagnosis and for immature hematopoietic stem cell subsets. Belongs to the tetraspanin web involved in tumor progression and metastasis. The polypeptide is CUB domain-containing protein 1 (CDCP1) (Homo sapiens (Human)).